The primary structure comprises 337 residues: Lipopolysaccharide 1,3-galactosyltransferase (337 aa).

Residues 33 to 38 (GIDKNF) and 130 to 131 (DA) contribute to the UDP site. Mg(2+)-binding residues include Asp130 and Asp132. 2 consecutive short sequence motifs (DXD) follow at residues 130–132 (DAD) and 219–221 (DQD). His264 is a Mg(2+) binding site. Residue 264-270 (HYIGPTK) participates in UDP binding.

Belongs to the glycosyltransferase 8 family. The cofactor is Mg(2+).

The enzyme catalyses UDP-alpha-D-galactose + [lipopolysaccharide] = UDP + 3-alpha-D-galactosyl-[lipopolysaccharide].. Its pathway is bacterial outer membrane biogenesis; LPS core biosynthesis. Inhibited in a competitive manner by closely related nonsubstrate lipopolysaccharides. Its function is as follows. Galactosyltransferase involved in the biosynthesis of the core oligosaccharide region of lipopolysaccharide (LPS). Catalyzes the addition of an alpha l,3-linked galactose (galactose I) to the first outer-core glucose (glucose I). Cannot use UDP-glucose. Activity probably does not require the branched galactose added by WaaB, but it is higher in the presence of this branched galactose. The sequence is that of Lipopolysaccharide 1,3-galactosyltransferase from Salmonella typhimurium (strain LT2 / SGSC1412 / ATCC 700720).